We begin with the raw amino-acid sequence, 285 residues long: Probable endonuclease 4 (285 aa).

Zn(2+) contacts are provided by His69, His109, Glu145, Asp179, His182, His216, Asp229, His231, and Glu261.

It belongs to the AP endonuclease 2 family. Zn(2+) serves as cofactor.

The enzyme catalyses Endonucleolytic cleavage to 5'-phosphooligonucleotide end-products.. Its function is as follows. Endonuclease IV plays a role in DNA repair. It cleaves phosphodiester bonds at apurinic or apyrimidinic (AP) sites, generating a 3'-hydroxyl group and a 5'-terminal sugar phosphate. The protein is Probable endonuclease 4 of Shigella flexneri serotype 5b (strain 8401).